The sequence spans 341 residues: Phosphate acyltransferase (341 aa).

Belongs to the PlsX family. As to quaternary structure, homodimer. Probably interacts with PlsY.

The protein localises to the cytoplasm. The catalysed reaction is a fatty acyl-[ACP] + phosphate = an acyl phosphate + holo-[ACP]. It functions in the pathway lipid metabolism; phospholipid metabolism. In terms of biological role, catalyzes the reversible formation of acyl-phosphate (acyl-PO(4)) from acyl-[acyl-carrier-protein] (acyl-ACP). This enzyme utilizes acyl-ACP as fatty acyl donor, but not acyl-CoA. In Nostoc sp. (strain PCC 7120 / SAG 25.82 / UTEX 2576), this protein is Phosphate acyltransferase.